The sequence spans 883 residues: AP-5 complex subunit beta-1 (883 aa).

In terms of assembly, probably part of the adaptor protein complex 5 (AP-5).

Functionally, as part of AP-5, a probable fifth adaptor protein complex, it may be involved in endosomal transport. The sequence is that of AP-5 complex subunit beta-1 (ap5b1) from Xenopus tropicalis (Western clawed frog).